Consider the following 237-residue polypeptide: Phosphoribosylaminoimidazole-succinocarboxamide synthase (237 aa).

The protein belongs to the SAICAR synthetase family.

It catalyses the reaction 5-amino-1-(5-phospho-D-ribosyl)imidazole-4-carboxylate + L-aspartate + ATP = (2S)-2-[5-amino-1-(5-phospho-beta-D-ribosyl)imidazole-4-carboxamido]succinate + ADP + phosphate + 2 H(+). The protein operates within purine metabolism; IMP biosynthesis via de novo pathway; 5-amino-1-(5-phospho-D-ribosyl)imidazole-4-carboxamide from 5-amino-1-(5-phospho-D-ribosyl)imidazole-4-carboxylate: step 1/2. This Halalkalibacterium halodurans (strain ATCC BAA-125 / DSM 18197 / FERM 7344 / JCM 9153 / C-125) (Bacillus halodurans) protein is Phosphoribosylaminoimidazole-succinocarboxamide synthase.